The sequence spans 441 residues: Trigger factor (441 aa).

In terms of domain architecture, PPIase FKBP-type spans 163–248 (GDQVVFDFVG…IKEVKKPVPA (86 aa)).

This sequence belongs to the FKBP-type PPIase family. Tig subfamily.

The protein localises to the cytoplasm. It carries out the reaction [protein]-peptidylproline (omega=180) = [protein]-peptidylproline (omega=0). Functionally, involved in protein export. Acts as a chaperone by maintaining the newly synthesized protein in an open conformation. Functions as a peptidyl-prolyl cis-trans isomerase. This Jannaschia sp. (strain CCS1) protein is Trigger factor.